The sequence spans 105 residues: Replication restart protein PriB (105 aa).

The region spanning 1 to 102 (MTTNRLVLSG…LHAEQIEFID (102 aa)) is the SSB domain.

Belongs to the PriB family. Homodimer. Interacts with PriA and DnaT. Component of the replication restart primosome. Primosome assembly occurs via a 'hand-off' mechanism. PriA binds to replication forks, subsequently PriB then DnaT bind; DnaT then displaces ssDNA to generate the helicase loading substrate.

In terms of biological role, involved in the restart of stalled replication forks, which reloads the replicative helicase on sites other than the origin of replication; the PriA-PriB pathway is the major replication restart pathway. During primosome assembly it facilitates complex formation between PriA and DnaT on DNA; stabilizes PriA on DNA. Stimulates the DNA unwinding activity of PriA helicase. In Yersinia pseudotuberculosis serotype O:1b (strain IP 31758), this protein is Replication restart protein PriB.